Reading from the N-terminus, the 190-residue chain is RNA-binding protein OPG065 (190 aa).

The 66-residue stretch at 5-70 (YIDERSDAEI…DIPPRWFMTT (66 aa)) folds into the Z-binding domain. Residues 117 to 184 (NPVTIINEYC…AKLAVDKLLG (68 aa)) form the DRBM domain.

This sequence belongs to the orthopoxvirus OPG065 family. Interacts with host G1P2/ISG15. Interacts with host EIF2AK2/PKR. Interacts with host ZBP1.

Its function is as follows. RNA-binding protein that plays a role in the inhibition of multiple cellular antiviral responses activated by double-stranded RNA (dsRNA), such as inhibition of PKR activation, necroptosis, and IFN-mediated antiviral activities. Recognizes and binds Z-RNA structures via its Z-binding domain and dsRNA via its DRBM domain: RNA-binding activity is required to escape host ZBP1-dependent necroptosis. Mechanistically, the Z-binding domain binds Z-RNAs that are produced during vaccinia virus infection, thereby competing with Z-RNA detection by host ZBP1, suppressing ZBP1-dependent necroptosis. Acts as a key inhibitor of the interferon response by blocking the phosphorylation and subsequent activation of IRF3 and IRF7 kinases that are required for interferon-alpha gene expression. Inhibits NF-kappa-B activation and the ubiquitin-like protein ISG15, which is an early antiviral protein. The binding with host ISG15 subsequently blocks host ISGylation. The chain is RNA-binding protein OPG065 (OPG065) from Homo sapiens (Human).